A 491-amino-acid chain; its full sequence is E3 ubiquitin-protein ligase Hakai (491 aa).

Disordered regions lie at residues 1-20 and 33-61; these read MDHT…LGGL and KQAS…GDEE. The RING-type zinc finger occupies 109–149; sequence CDKCGLPIKVYGRMIPCKHVFCYDCAILHEKKGDKMCPGCS. The interval 148-206 is HYB domain; that stretch reads CSDPVQRIEQCTRGSLFMCSIVQGCKRTYLSQRDLQAHINHRHMRAGKPVTRASLENVH. The segment at 164–190 adopts a C2H2-type zinc-finger fold; it reads FMCSIVQGCKRTYLSQRDLQAHINHRH. A phosphoserine mark is found at Ser-201, Ser-285, and Ser-290. Residues 255 to 491 are disordered; sequence QPHEDIRAPP…DQTRYRPYYQ (237 aa). Pro residues-rich tracts occupy residues 342–359, 372–389, and 399–423; these read APPP…PHPP, APPP…PPPG, and MNHP…PPHH. The segment covering 427-442 has biased composition (polar residues); that stretch reads NSLPQFTEDQGTLSPP. The segment covering 457 to 478 has biased composition (pro residues); it reads PRGPPPPPRMQGPPSQTPLPGP.

This sequence belongs to the Hakai family. As to quaternary structure, homodimer. Interacts with tyrosine-phosphorylated SRC substrates. Component of the WMM complex, a N6-methyltransferase complex composed of a catalytic subcomplex, named MAC, and of an associated subcomplex, named MACOM. The MAC subcomplex is composed of METTL3 and METTL14. The MACOM subcomplex is composed of WTAP, ZC3H13, CBLL1/HAKAI, VIRMA, and, in some cases of RBM15 (RBM15 or RBM15B). Also a component of a MACOM-like complex, named WTAP complex, composed of WTAP, ZC3H13, CBLL1, VIRMA, RBM15, BCLAF1 and THRAP3. In terms of processing, phosphorylated on tyrosine residues. In terms of tissue distribution, detected in heart, brain, spleen, lung, liver, skeletal muscle, kidney and testis.

The protein localises to the nucleus speckle. The protein resides in the nucleus. Its subcellular location is the nucleoplasm. It is found in the cytoplasm. It catalyses the reaction S-ubiquitinyl-[E2 ubiquitin-conjugating enzyme]-L-cysteine + [acceptor protein]-L-lysine = [E2 ubiquitin-conjugating enzyme]-L-cysteine + N(6)-ubiquitinyl-[acceptor protein]-L-lysine.. It participates in protein modification; protein ubiquitination. Functionally, E3 ubiquitin-protein ligase that mediates ubiquitination of several tyrosine-phosphorylated Src substrates, including CDH1, CTTN and DOK1. Targets CDH1 for endocytosis and degradation. Associated component of the WMM complex, a complex that mediates N6-methyladenosine (m6A) methylation of RNAs, a modification that plays a role in the efficiency of mRNA splicing and RNA processing. Its function in the WMM complex is unknown. This is E3 ubiquitin-protein ligase Hakai from Mus musculus (Mouse).